Here is a 78-residue protein sequence, read N- to C-terminus: Large ribosomal subunit protein bL28 (78 aa).

Belongs to the bacterial ribosomal protein bL28 family.

The polypeptide is Large ribosomal subunit protein bL28 (Gloeothece citriformis (strain PCC 7424) (Cyanothece sp. (strain PCC 7424))).